The primary structure comprises 437 residues: tRNA(Ile)-lysidine synthase (437 aa).

Residue 22–27 (SGGLDS) coordinates ATP.

The protein belongs to the tRNA(Ile)-lysidine synthase family.

The protein localises to the cytoplasm. It catalyses the reaction cytidine(34) in tRNA(Ile2) + L-lysine + ATP = lysidine(34) in tRNA(Ile2) + AMP + diphosphate + H(+). In terms of biological role, ligates lysine onto the cytidine present at position 34 of the AUA codon-specific tRNA(Ile) that contains the anticodon CAU, in an ATP-dependent manner. Cytidine is converted to lysidine, thus changing the amino acid specificity of the tRNA from methionine to isoleucine. This chain is tRNA(Ile)-lysidine synthase, found in Xylella fastidiosa (strain 9a5c).